We begin with the raw amino-acid sequence, 303 residues long: Nucleotide-binding protein SAR0820 (303 aa).

Residue 18 to 25 participates in ATP binding; the sequence is GLSGAGKS. GTP is bound at residue 69–72; that stretch reads DLRG.

Belongs to the RapZ-like family.

Displays ATPase and GTPase activities. The chain is Nucleotide-binding protein SAR0820 from Staphylococcus aureus (strain MRSA252).